Reading from the N-terminus, the 117-residue chain is Photosystem II reaction center Psb28 protein (117 aa).

Belongs to the Psb28 family. As to quaternary structure, part of the photosystem II complex.

The protein resides in the cellular thylakoid membrane. In Prochlorococcus marinus (strain MIT 9211), this protein is Photosystem II reaction center Psb28 protein.